Consider the following 354-residue polypeptide: Uroporphyrinogen decarboxylase (354 aa).

Residues 27 to 31 (RQAGR), aspartate 77, tyrosine 154, serine 209, and histidine 327 contribute to the substrate site.

It belongs to the uroporphyrinogen decarboxylase family. Homodimer.

Its subcellular location is the cytoplasm. The enzyme catalyses uroporphyrinogen III + 4 H(+) = coproporphyrinogen III + 4 CO2. Its pathway is porphyrin-containing compound metabolism; protoporphyrin-IX biosynthesis; coproporphyrinogen-III from 5-aminolevulinate: step 4/4. In terms of biological role, catalyzes the decarboxylation of four acetate groups of uroporphyrinogen-III to yield coproporphyrinogen-III. This chain is Uroporphyrinogen decarboxylase, found in Shewanella amazonensis (strain ATCC BAA-1098 / SB2B).